We begin with the raw amino-acid sequence, 128 residues long: uncharacterized protein (128 aa).

This is an uncharacterized protein from Archaeoglobus fulgidus (strain ATCC 49558 / DSM 4304 / JCM 9628 / NBRC 100126 / VC-16).